The sequence spans 184 residues: Putative serine carboxypeptidase-like 52 (184 aa).

An N-terminal signal peptide occupies residues Met-1 to Ser-22. A glycan (N-linked (GlcNAc...) asparagine) is linked at Asn-93.

Belongs to the peptidase S10 family.

The protein resides in the secreted. In Arabidopsis thaliana (Mouse-ear cress), this protein is Putative serine carboxypeptidase-like 52 (SCPL52).